A 68-amino-acid chain; its full sequence is Large ribosomal subunit protein uL29 (68 aa).

Belongs to the universal ribosomal protein uL29 family.

The chain is Large ribosomal subunit protein uL29 from Streptococcus pneumoniae (strain JJA).